Consider the following 115-residue polypeptide: Large ribosomal subunit protein bL20 (115 aa).

Belongs to the bacterial ribosomal protein bL20 family.

Its function is as follows. Binds directly to 23S ribosomal RNA and is necessary for the in vitro assembly process of the 50S ribosomal subunit. It is not involved in the protein synthesizing functions of that subunit. The chain is Large ribosomal subunit protein bL20 from Malacoplasma penetrans (strain HF-2) (Mycoplasma penetrans).